A 123-amino-acid polypeptide reads, in one-letter code: Holo-[acyl-carrier-protein] synthase (123 aa).

Mg(2+) is bound by residues D8 and E60.

Belongs to the P-Pant transferase superfamily. AcpS family. Mg(2+) is required as a cofactor.

The protein localises to the cytoplasm. The catalysed reaction is apo-[ACP] + CoA = holo-[ACP] + adenosine 3',5'-bisphosphate + H(+). Transfers the 4'-phosphopantetheine moiety from coenzyme A to a Ser of acyl-carrier-protein. In Wolbachia pipientis wMel, this protein is Holo-[acyl-carrier-protein] synthase.